The sequence spans 128 residues: Large ribosomal subunit protein uL22 (128 aa).

It belongs to the universal ribosomal protein uL22 family. In terms of assembly, part of the 50S ribosomal subunit.

Functionally, this protein binds specifically to 23S rRNA; its binding is stimulated by other ribosomal proteins, e.g. L4, L17, and L20. It is important during the early stages of 50S assembly. It makes multiple contacts with different domains of the 23S rRNA in the assembled 50S subunit and ribosome. The globular domain of the protein is located near the polypeptide exit tunnel on the outside of the subunit, while an extended beta-hairpin is found that lines the wall of the exit tunnel in the center of the 70S ribosome. In Rhodopseudomonas palustris (strain BisB18), this protein is Large ribosomal subunit protein uL22.